Reading from the N-terminus, the 318-residue chain is Oncosphere antigen A (318 aa).

3 consecutive Fibronectin type-III domains span residues 6–103 (IPQN…TPLP), 109–207 (KPSF…ISRA), and 211–308 (VPQN…TPSV).

This Hydatigena taeniaeformis (Feline tapeworm) protein is Oncosphere antigen A (ONCA).